The sequence spans 583 residues: Probable GTP diphosphokinase CRSH, chloroplastic (583 aa).

A chloroplast-targeting transit peptide spans 1–58; the sequence is MSVIRPSPIPIPRCRSQVLHRRLYSIQLIQRRRRRWNPRSEVEDTAIESTARSPEAAG. The region spanning 112–212 is the HD domain; sequence PLSKALSLSI…MDLVSKLDEM (101 aa). EF-hand domains lie at 470–505 and 507–539; these read TTTN…LGAP and EDAE…VEFM. Ca(2+) is bound by residues Asp483, Asn485, Asp487, Met489, Glu494, Asp517, Asn519, Asp521, Ser523, and Glu528.

It belongs to the RelA/SpoT family. As to expression, expressed in shoots, cotyledons, rosette and cauline leaves, stems, sepals, pistils and siliques.

Its subcellular location is the plastid. The protein localises to the chloroplast. It carries out the reaction GTP + ATP = guanosine 3'-diphosphate 5'-triphosphate + AMP. Activated by calcium. Functionally, possesses calcium-dependent ppGpp (guanosine 3'-diphosphate 5'-diphosphate) synthetase activity in vitro and is able to functionally complement E.coli relA mutants. Plays an important role in the timing adjustment of pistil and pollen maturation required for successful pollination. May be involved in a rapid plant ppGpp-mediated response to pathogens and other stresses. The sequence is that of Probable GTP diphosphokinase CRSH, chloroplastic (CRSH) from Arabidopsis thaliana (Mouse-ear cress).